The primary structure comprises 296 residues: 4-hydroxy-tetrahydrodipicolinate synthase (296 aa).

Thr-49 is a binding site for pyruvate. Tyr-137 (proton donor/acceptor) is an active-site residue. The active-site Schiff-base intermediate with substrate is Lys-166. Position 208 (Ile-208) interacts with pyruvate.

The protein belongs to the DapA family. As to quaternary structure, homotetramer; dimer of dimers.

It is found in the cytoplasm. It catalyses the reaction L-aspartate 4-semialdehyde + pyruvate = (2S,4S)-4-hydroxy-2,3,4,5-tetrahydrodipicolinate + H2O + H(+). The protein operates within amino-acid biosynthesis; L-lysine biosynthesis via DAP pathway; (S)-tetrahydrodipicolinate from L-aspartate: step 3/4. Its function is as follows. Catalyzes the condensation of (S)-aspartate-beta-semialdehyde [(S)-ASA] and pyruvate to 4-hydroxy-tetrahydrodipicolinate (HTPA). This Chlorobium chlorochromatii (strain CaD3) protein is 4-hydroxy-tetrahydrodipicolinate synthase.